Reading from the N-terminus, the 302-residue chain is MIEGQTSVPGEPDPSGTDTTLVVVTGVSGGGRSTVARALENVGYYVVDNLPQALMLDMAELAMKAGGAARRTAMVLDVRSRAFSTDLVGAIRELKERGFGPRVVFVDADDEVLIRRFESVRRSHPLQGEGRLADGIAVERGLLEGARDQADVFVDTSHLNVNQLRRRIEELFGAEDARRLRVTVVSFGFKYGVPPDADFVCDARFLPNPYWVPELREHTGQVEAVSSYVLGQAGAEDFVATYADLLNATTAGFEREGKRYVTAAVGCTGGKHRSVAIAEELAARLRQTGLAATAQHRDLGRE.

Residue 26–33 (GVSGGGRS) participates in ATP binding. 77-80 (DVRS) provides a ligand contact to GTP.

This sequence belongs to the RapZ-like family.

In terms of biological role, displays ATPase and GTPase activities. The polypeptide is Nucleotide-binding protein Strop_3101 (Salinispora tropica (strain ATCC BAA-916 / DSM 44818 / JCM 13857 / NBRC 105044 / CNB-440)).